Here is a 312-residue protein sequence, read N- to C-terminus: Ribose-phosphate pyrophosphokinase (312 aa).

Residues 38–40 and 97–98 contribute to the ATP site; these read DGE and RQ. Positions 131 and 170 each coordinate Mg(2+). Lys193 is an active-site residue. D-ribose 5-phosphate-binding positions include Arg195, Asp219, and 223–227; that span reads DTAGT.

It belongs to the ribose-phosphate pyrophosphokinase family. Class I subfamily. Homohexamer. Requires Mg(2+) as cofactor.

The protein resides in the cytoplasm. It carries out the reaction D-ribose 5-phosphate + ATP = 5-phospho-alpha-D-ribose 1-diphosphate + AMP + H(+). It participates in metabolic intermediate biosynthesis; 5-phospho-alpha-D-ribose 1-diphosphate biosynthesis; 5-phospho-alpha-D-ribose 1-diphosphate from D-ribose 5-phosphate (route I): step 1/1. Functionally, involved in the biosynthesis of the central metabolite phospho-alpha-D-ribosyl-1-pyrophosphate (PRPP) via the transfer of pyrophosphoryl group from ATP to 1-hydroxyl of ribose-5-phosphate (Rib-5-P). In Leptospira interrogans serogroup Icterohaemorrhagiae serovar copenhageni (strain Fiocruz L1-130), this protein is Ribose-phosphate pyrophosphokinase.